We begin with the raw amino-acid sequence, 126 residues long: Large ribosomal subunit protein bL17c (126 aa).

A chloroplast-targeting transit peptide spans 1–10 (MIDNGGRFFA).

Component of the chloroplast large ribosomal subunit (LSU). Mature 70S chloroplast ribosomes of higher plants consist of a small (30S) and a large (50S) subunit. The 30S small subunit contains 1 molecule of ribosomal RNA (16S rRNA) and 24 different proteins. The 50S large subunit contains 3 rRNA molecules (23S, 5S and 4.5S rRNA) and 33 different proteins.

Its subcellular location is the plastid. The protein localises to the chloroplast. Component of the chloroplast ribosome (chloro-ribosome), a dedicated translation machinery responsible for the synthesis of chloroplast genome-encoded proteins, including proteins of the transcription and translation machinery and components of the photosynthetic apparatus. The sequence is that of Large ribosomal subunit protein bL17c (RPL17) from Spinacia oleracea (Spinach).